Reading from the N-terminus, the 702-residue chain is Ribosomal RNA large subunit methyltransferase K/L (702 aa).

The THUMP domain maps to 43–154 (LVYQSLMWSR…KETASIALDL (112 aa)).

It belongs to the methyltransferase superfamily. RlmKL family.

Its subcellular location is the cytoplasm. It carries out the reaction guanosine(2445) in 23S rRNA + S-adenosyl-L-methionine = N(2)-methylguanosine(2445) in 23S rRNA + S-adenosyl-L-homocysteine + H(+). The catalysed reaction is guanosine(2069) in 23S rRNA + S-adenosyl-L-methionine = N(2)-methylguanosine(2069) in 23S rRNA + S-adenosyl-L-homocysteine + H(+). Its function is as follows. Specifically methylates the guanine in position 2445 (m2G2445) and the guanine in position 2069 (m7G2069) of 23S rRNA. The protein is Ribosomal RNA large subunit methyltransferase K/L of Escherichia coli O6:K15:H31 (strain 536 / UPEC).